Consider the following 658-residue polypeptide: Outer dynein arm-docking complex subunit 1 (658 aa).

3 coiled-coil regions span residues 11–156 (KEVH…RYLN), 186–234 (REEA…KNDE), and 303–380 (NFIN…TDIQ). Disordered regions lie at residues 496 to 552 (DEEE…SVSH) and 574 to 658 (GAPV…RGYN). Phosphoserine is present on residues S500, S506, S507, and S509. Composition is skewed to low complexity over residues 506–519 (SSPS…QISL), 574–583 (GAPVSSRSSQ), 592–604 (TSSS…TGYL), and 621–639 (SMGS…HASS).

It belongs to the ODA1/DCC2 family. As to quaternary structure, component of the outer dynein arm-docking complex along with ODAD2, ODAD3, ODAD4 and CLXN. Interacts with ODAD3. Interacts with ODAD4; this interaction may facilitate the recruitment and/or attachment of outer dynein arm docking complex proteins including ODAD1, ODAD3, and ODAD4 to ciliary axonemes. Interacts with DNAH9. Interacts with MNS1. Interacts with PIERCE1 and PIERCE2; the interactions link the outer dynein arms docking complex (ODA-DC) to the internal microtubule inner proteins (MIP) in cilium axoneme. In terms of tissue distribution, expressed in motile ciliated tissues.

It localises to the cytoplasm. Its subcellular location is the cytoskeleton. The protein localises to the cilium axoneme. Component of the outer dynein arm-docking complex that mediates outer dynein arms (ODA) binding onto the doublet microtubule. Involved in mediating assembly of both ODAs and their axonemal docking complex onto ciliary microtubules. The chain is Outer dynein arm-docking complex subunit 1 (Odad1) from Mus musculus (Mouse).